Consider the following 547-residue polypeptide: MKEIVTLTNVSYEVKDQTVFKHVNASVQQGDIIGIIGKNGAGKSTLLHLIHNDLAPAQGQILRKDIKLALVEQETAAYSFADQTPAEKKLLEKWHVPLRDFHQLSGGEKLKARLAKGLSEDADLLLLDEPTNHLDEKSLQFLIQQLKHYNGTVILVSHDRYFLDEAATKIWSLEDQTLIEFKGNYSGYMKFREKKRLTQQREYEKQQKMVERIEAQMNGLASWSEKAHAQSTKKEGFKEYHRVKAKRTDAQIKSKQKRLEKELEKAKAEPVTPEYTVRFSIDTTHKTGKRFLEVQNVTKAFGERTLFKNANFTIQHGEKVAIIGPNGSGKTTLLNIILGQETAEGSVWVSPSANIGYLTQEVFDLPLEQTPEELFENETFKARGHVQNLMRHLGFTAAQWTEPIKHMSMGERVKIKLMAYILEEKDVLILDEPTNHLDLPSREQLEETLSQYSGTLLAVSHDRYFLEKTTNSKLVISNNGIEKQLNDVPSERNEREELRLKLETERQEVLGKLSFMTPNDKGYKELDQAFNELTKRIKELDHQDKKD.

The ABC transporter 1 domain maps to 5–200; it reads VTLTNVSYEV…FREKKRLTQQ (196 aa). 37-44 lines the ATP pocket; sequence GKNGAGKS. Positions 183-289 are antibiotic resistance domain (ARD); that stretch reads GNYSGYMKFR…SIDTTHKTGK (107 aa). 2 coiled-coil regions span residues 193–222 and 245–269; these read EKKRLTQQREYEKQQKMVERIEAQMNGLAS and AKRTDAQIKSKQKRLEKELEKAKAE. In terms of domain architecture, ABC transporter 2 spans 292–504; the sequence is LEVQNVTKAF…REELRLKLET (213 aa). An ATP-binding site is contributed by 324–331; that stretch reads GPNGSGKT. A C-terminal extension (CTE) region spans residues 483-547; the sequence is KQLNDVPSER…KELDHQDKKD (65 aa). The stretch at 488–543 forms a coiled coil; it reads VPSERNEREELRLKLETERQEVLGKLSFMTPNDKGYKELDQAFNELTKRIKELDHQ.

It belongs to the ABC transporter superfamily. ABCF family. ARE2 subfamily. As to quaternary structure, binds within the E-site of the 70S ribosome, where it contacts ribosomal proteins L1, L5, L33-1, S7, S11, the 16 and 23S rRNAs and the acceptor arm of the P-site tRNA.

The protein localises to the cytoplasm. Functionally, recognizes and binds in the vacant E-site of ribosomes stalled by some peptidyltransferase center (PTC)-targeting antibiotics. Makes contact with the PTC and both ribosomal subunits. Induces conformational changes in the P-site, which allows it to dislodge the antibiotic from its PTC binding site. Binds to ribosomes either directly following translation initation or subsequent to E tRNA release during elongation. Involved in resistance to a narrow spectrum of antibiotics (the streptogramin A antibiotic virginiamycin M, the lincosamide antibiotic lincomycin and the pleuromutilin antibiotic tiamulin). The chain is Ribosome protection protein VmlR from Bacillus subtilis (strain 168).